A 481-amino-acid polypeptide reads, in one-letter code: UDP-N-acetylmuramoyl-L-alanyl-D-glutamate--L-lysine ligase (481 aa).

S42 is a binding site for UDP-N-acetyl-alpha-D-muramoyl-L-alanyl-D-glutamate. 118–124 lines the ATP pocket; that stretch reads GTKGKTT. UDP-N-acetyl-alpha-D-muramoyl-L-alanyl-D-glutamate contacts are provided by residues Q158, 160 to 161, S187, and R195; that span reads TT. K229 is subject to N6-carboxylysine. The L-lysine recognition motif signature appears at 404–407; that stretch reads DDPN.

The protein belongs to the MurCDEF family. MurE subfamily. In terms of processing, carboxylation is probably crucial for Mg(2+) binding and, consequently, for the gamma-phosphate positioning of ATP.

The protein resides in the cytoplasm. It catalyses the reaction UDP-N-acetyl-alpha-D-muramoyl-L-alanyl-D-glutamate + L-lysine + ATP = UDP-N-acetyl-alpha-D-muramoyl-L-alanyl-gamma-D-glutamyl-L-lysine + ADP + phosphate + H(+). The protein operates within cell wall biogenesis; peptidoglycan biosynthesis. Its function is as follows. Catalyzes the addition of L-lysine to the nucleotide precursor UDP-N-acetylmuramoyl-L-alanyl-D-glutamate (UMAG) in the biosynthesis of bacterial cell-wall peptidoglycan. This is UDP-N-acetylmuramoyl-L-alanyl-D-glutamate--L-lysine ligase from Streptococcus pyogenes serotype M18 (strain MGAS8232).